We begin with the raw amino-acid sequence, 716 residues long: Translation initiation factor IF-2 (716 aa).

Positions 50 to 136 (YKKGGARAKS…VKPKKELPEK (87 aa)) are disordered. The segment covering 62–84 (PAETNKNKQPQGVNQQSAGNQPN) has biased composition (polar residues). The segment covering 101 to 113 (KNKKNNNNKKNKR) has biased composition (basic residues). Residues 114 to 126 (NNNNNKNQHQQKP) are compositionally biased toward low complexity. The tr-type G domain maps to 217–386 (IRPPVVTIMG…LLVSEVEELK (170 aa)). The segment at 226–233 (GHVDHGKT) is G1. 226–233 (GHVDHGKT) contacts GTP. The interval 251 to 255 (GITQH) is G2. A G3 region spans residues 272 to 275 (DTPG). Residues 272 to 276 (DTPGH) and 326 to 329 (NKID) each bind GTP. The interval 326–329 (NKID) is G4. The G5 stretch occupies residues 362-364 (SAL).

This sequence belongs to the TRAFAC class translation factor GTPase superfamily. Classic translation factor GTPase family. IF-2 subfamily.

Its subcellular location is the cytoplasm. One of the essential components for the initiation of protein synthesis. Protects formylmethionyl-tRNA from spontaneous hydrolysis and promotes its binding to the 30S ribosomal subunits. Also involved in the hydrolysis of GTP during the formation of the 70S ribosomal complex. The sequence is that of Translation initiation factor IF-2 (infB) from Bacillus subtilis (strain 168).